The sequence spans 230 residues: Fibrillarin-like rRNA/tRNA 2'-O-methyltransferase (230 aa).

Residues 89-90, 107-108, 132-133, and 152-155 contribute to the S-adenosyl-L-methionine site; these read TT, EV, DA, and DISQ.

The protein belongs to the methyltransferase superfamily. Fibrillarin family. As to quaternary structure, interacts with nop5. Component of box C/D small ribonucleoprotein (sRNP) particles that contain rpl7ae, FlpA and nop5, plus a guide RNA.

In terms of biological role, involved in pre-rRNA and tRNA processing. Utilizes the methyl donor S-adenosyl-L-methionine to catalyze the site-specific 2'-hydroxyl methylation of ribose moieties in rRNA and tRNA. Site specificity is provided by a guide RNA that base pairs with the substrate. Methylation occurs at a characteristic distance from the sequence involved in base pairing with the guide RNA. This is Fibrillarin-like rRNA/tRNA 2'-O-methyltransferase from Thermoplasma acidophilum (strain ATCC 25905 / DSM 1728 / JCM 9062 / NBRC 15155 / AMRC-C165).